The primary structure comprises 27 residues: Caerulein precursor fragment R1 (27 aa).

As to expression, expressed by the skin glands.

Its subcellular location is the secreted. Antimicrobial peptide. In Xenopus ruwenzoriensis (Uganda clawed frog), this protein is Caerulein precursor fragment R1.